The chain runs to 83 residues: MSSGGLFLLLGLLTLWEVLTPVSSKDRPKFCELPPDSGSCKGSFQAFYYHPVHRTCLEFIYGGCEGNDNNFKTIDECKRTCAA.

The signal sequence occupies residues 1-24; sequence MSSGGLFLLLGLLTLWEVLTPVSS. Positions 31-81 constitute a BPTI/Kunitz inhibitor domain; sequence CELPPDSGSCKGSFQAFYYHPVHRTCLEFIYGGCEGNDNNFKTIDECKRTC. Cystine bridges form between cysteine 31–cysteine 81, cysteine 40–cysteine 64, and cysteine 56–cysteine 77.

The protein belongs to the venom Kunitz-type family. As to expression, expressed by the venom gland.

The protein localises to the secreted. Functionally, serine protease inhibitor. The polypeptide is Kunitz-type serine protease inhibitor mulgin-2 (Pseudechis australis (Mulga snake)).